The chain runs to 360 residues: MSIVYNKTPLLRQFFPGKASAQFFLKYECLQPSGSFKSRGIGNLIMKSAIRIQKDGKRSPQVFASSGGNAGFAAATACQRLSLPCTVVVPTATKKRMVDKIRNTGAQVIVSGAYWKEADTFLKTNVMNKIDSQVIEPIYVHPFDNPDIWEGHSSMIDEIVQDLKSQHISVNKVKGIVCSVGGGGLYNGIIQGLERYGLADRIPIVGVETNGCHVFNTSLKIGQPVQFKKITSIATSLGTAVISNQTFEYARKYNTRSVVIEDKDVIETCLKYTHQFNMVIEPACGAALHLGYNTKILENALGSKLAADDIVIIIACGGSSNTIKDLEEALDSMRKKDTPVIEVADNFIFPEKNIVNLKSA.

At S2 the chain carries N-acetylserine. The residue at position 37 (K37) is an N6-(pyridoxal phosphate)lysine.

It belongs to the serine/threonine dehydratase family. Pyridoxal 5'-phosphate serves as cofactor.

It is found in the mitochondrion. It carries out the reaction L-serine = pyruvate + NH4(+). The catalysed reaction is L-threonine = 2-oxobutanoate + NH4(+). The chain is Catabolic L-serine/threonine dehydratase (CHA1) from Saccharomyces cerevisiae (strain ATCC 204508 / S288c) (Baker's yeast).